The chain runs to 687 residues: Transcription activator of gluconeogenesis SNOG_12336 (687 aa).

The interval 1–56 (MASPDAEDASPSPEYRSDLDDDMAAEQKTDDGSPSQKSSNGQKPASNAKDPLRPRR) is disordered. Positions 32-45 (GSPSQKSSNGQKPA) are enriched in polar residues. Residues 63-91 (CFACQRAHLTCGDERPCTRCIKRGLQDHC) constitute a DNA-binding region (zn(2)-C6 fungal-type). Composition is skewed to polar residues over residues 150–159 (PSGTFYQPPS) and 169–179 (HGRSFSDQQSP). 3 disordered regions span residues 150-214 (PSGT…GPLF), 300-411 (ESQS…KRHR), and 536-561 (GNSREADESEMSTQTNTTPNLTGQEA). Residues 195-212 (PPSSISQGQPGQMQQFGP) are compositionally biased toward low complexity. Positions 300-318 (ESQSRQNSMHIHTPTSSAT) are enriched in polar residues. Residues 342 to 357 (PSSHSTASPASTDASA) are compositionally biased toward low complexity. Composition is skewed to polar residues over residues 362–384 (NPLSTATFFANTNRGQPQRSPTT), 392–402 (RPPSTALQPIH), and 546–561 (MSTQTNTTPNLTGQEA). Positions 482–553 (NLMTLQDHFT…SEMSTQTNTT (72 aa)) constitute a PAS domain.

Belongs to the ERT1/acuK family.

Its subcellular location is the nucleus. Functionally, transcription factor which regulates nonfermentable carbon utilization. Activator of gluconeogenetic genes. The chain is Transcription activator of gluconeogenesis SNOG_12336 from Phaeosphaeria nodorum (strain SN15 / ATCC MYA-4574 / FGSC 10173) (Glume blotch fungus).